A 95-amino-acid polypeptide reads, in one-letter code: Putative defensin-like protein 252 (95 aa).

The N-terminal stretch at 1 to 27 (MRCVTSFVVLCILMFLVVNNVKVDVKA) is a signal peptide. Intrachain disulfides connect Cys-34-Cys-93, Cys-45-Cys-72, Cys-56-Cys-85, and Cys-70-Cys-87.

This sequence belongs to the DEFL family.

Its subcellular location is the secreted. The polypeptide is Putative defensin-like protein 252 (SCRL13) (Arabidopsis thaliana (Mouse-ear cress)).